A 600-amino-acid chain; its full sequence is Alpha pinene synthase, chloroplastic (600 aa).

Residues 1 to 26 form a disordered region; it reads MSSISMHARPLNISAANNHHPSWDRR. A chloroplast-targeting transit peptide spans 1 to 31; the sequence is MSSISMHARPLNISAANNHHPSWDRRVSKPR. Residues Asp354, Asp358, Asp498, and Glu506 each coordinate Mg(2+). The DDXXD motif motif lies at 354 to 358; sequence DDVYD.

Belongs to the terpene synthase family. Tpsa subfamily. It depends on Mg(2+) as a cofactor. Mn(2+) is required as a cofactor. In terms of tissue distribution, barely detectable in leaves.

The protein resides in the plastid. It localises to the chloroplast. The catalysed reaction is (2E)-geranyl diphosphate = alpha-pinene + diphosphate. It participates in secondary metabolite biosynthesis; terpenoid biosynthesis. Its function is as follows. Monoterpene synthase involved in the biosynthesis of volatile compounds widely used in aromatherapy and folk medicine, and present in culinary herbs. Mediates the conversion of (2E)-geranyl diphosphate (GPP) into alpha-pinene and, as minor compounds, into alpha-phellandrene, limonene and alpha-terpinolene. In Lavandula stoechas (Butterfly lavender), this protein is Alpha pinene synthase, chloroplastic.